We begin with the raw amino-acid sequence, 62 residues long: Snaclec aspercetin subunit beta (62 aa).

A disulfide bond links Cys-2 and Cys-13. The C-type lectin domain occupies 9 to 62 (YEGHCYRVFKPPKDWADAERFCSQQAKGGHLVSIERFGREDFVSNLITKNLQRG).

Belongs to the snaclec family. As to quaternary structure, heterodimer; disulfide-linked. As to expression, expressed by the venom gland.

Its subcellular location is the secreted. Functionally, snaclec that binds to von Willebrand factor (VWF) and induces its interaction with GPIbalpha (GP1BA) (via the vWF A1 domain), resulting in platelet aggregation. Intramuscular and intravenous injections in mice induce a dose-dependent drop in platelet count (thrombocytopenia). Pretreatment by intravenous injection by this protein in mice potentiates the hemorrhagic lesion in the skin provoked by the metalloproteinase BaP1 intradermally injected. This result is not observed when both BaP1 and this protein are injected simultaneously. This is Snaclec aspercetin subunit beta from Bothrops asper (Terciopelo).